The following is a 953-amino-acid chain: Atromentin synthetase invA2 (953 aa).

Residues 38–460 (RAVSQYPNHE…SGRIKDTVIV (423 aa)) form an adenylation (A) domain region. In terms of domain architecture, Carrier spans 592–670 (APSTETEKTL…SLAKYVDSLI (79 aa)). Residues 597–667 (TEKTLAGIYA…VISSLAKYVD (71 aa)) are thiolation and peptide carrier (T) domain. Position 629 is an O-(pantetheine 4'-phosphoryl)serine (Ser629). The segment at 693 to 795 (PIFMVHPGVG…FTGLINIPPH (103 aa)) is thioesterase (TE) domain.

This sequence belongs to the ATP-dependent AMP-binding enzyme family.

The protein operates within secondary metabolite biosynthesis. An L-tyrosine:2-oxoglutarate aminotransferase (probably invD) and atromentin synthetase invA2 catalyze consecutive steps to turn over L-tyrosine into atromentin, which represents the generic precursor molecule for the entire terphenylquinone and pulvinic acid family of pigments, which are widely distributed secondary metabolites in homobasidiomycetes. The first step catalyzed by the aminotransferase converts L-tyrosine in to 4-hydroxyphenylpyruvate (4-HPP). Adenylation of two 4-HPP monomers by the invA2 adenylation (A) domain, covalent tethering of the monomers as a thioester and oxoester onto the invA2 thiolation (T) and thioesterase (TE) domains, respectively, and symmetric C-C-bond formation between two monomers catalyzed by the invA2 TE domain leads to atromentin. The sequence is that of Atromentin synthetase invA2 (invA2) from Paxillus involutus (Naked brimcap).